Here is a 551-residue protein sequence, read N- to C-terminus: Chaperonin GroEL (551 aa).

ATP is bound by residues 29–32 (TMGP), lysine 50, 86–90 (DGTTT), glycine 414, 478–480 (NAA), and aspartate 494.

This sequence belongs to the chaperonin (HSP60) family. Forms a cylinder of 14 subunits composed of two heptameric rings stacked back-to-back. Interacts with the co-chaperonin GroES.

It is found in the cytoplasm. The catalysed reaction is ATP + H2O + a folded polypeptide = ADP + phosphate + an unfolded polypeptide.. In terms of biological role, together with its co-chaperonin GroES, plays an essential role in assisting protein folding. The GroEL-GroES system forms a nano-cage that allows encapsulation of the non-native substrate proteins and provides a physical environment optimized to promote and accelerate protein folding. The protein is Chaperonin GroEL of Legionella jeonii.